A 136-amino-acid chain; its full sequence is Transcription antitermination protein NusB (136 aa).

The protein belongs to the NusB family.

Functionally, involved in transcription antitermination. Required for transcription of ribosomal RNA (rRNA) genes. Binds specifically to the boxA antiterminator sequence of the ribosomal RNA (rrn) operons. This Pseudoalteromonas translucida (strain TAC 125) protein is Transcription antitermination protein NusB.